A 157-amino-acid chain; its full sequence is Aspartate carbamoyltransferase regulatory chain (157 aa).

Zn(2+)-binding residues include cysteine 108, cysteine 113, cysteine 138, and cysteine 141.

The protein belongs to the PyrI family. As to quaternary structure, contains catalytic and regulatory chains. Zn(2+) serves as cofactor.

Involved in allosteric regulation of aspartate carbamoyltransferase. The polypeptide is Aspartate carbamoyltransferase regulatory chain (Korarchaeum cryptofilum (strain OPF8)).